A 101-amino-acid chain; its full sequence is Small ribosomal subunit protein uS14 (101 aa).

Belongs to the universal ribosomal protein uS14 family. In terms of assembly, part of the 30S ribosomal subunit. Contacts proteins S3 and S10.

Its function is as follows. Binds 16S rRNA, required for the assembly of 30S particles and may also be responsible for determining the conformation of the 16S rRNA at the A site. This is Small ribosomal subunit protein uS14 from Shewanella sediminis (strain HAW-EB3).